A 140-amino-acid polypeptide reads, in one-letter code: Ribosome-binding factor A (140 aa).

The interval 116-140 (RERQERGEIPPGSDDAQNCHDDEPS) is disordered.

This sequence belongs to the RbfA family. Monomer. Binds 30S ribosomal subunits, but not 50S ribosomal subunits or 70S ribosomes.

The protein localises to the cytoplasm. Functionally, one of several proteins that assist in the late maturation steps of the functional core of the 30S ribosomal subunit. Associates with free 30S ribosomal subunits (but not with 30S subunits that are part of 70S ribosomes or polysomes). Required for efficient processing of 16S rRNA. May interact with the 5'-terminal helix region of 16S rRNA. This Synechococcus sp. (strain WH7803) protein is Ribosome-binding factor A.